A 393-amino-acid chain; its full sequence is Elongation factor Tu (393 aa).

A tr-type G domain is found at 10–203 (KPHVNIGTIG…AVDSYIPEPV (194 aa)). The segment at 19–26 (GHVDHGKT) is G1. 19 to 26 (GHVDHGKT) serves as a coordination point for GTP. Threonine 26 is a binding site for Mg(2+). A G2 region spans residues 60 to 64 (GITIS). Residues 81 to 84 (DCPG) are G3. Residues 81 to 85 (DCPGH) and 136 to 139 (NKVD) contribute to the GTP site. Residues 136–139 (NKVD) form a G4 region. A G5 region spans residues 173–175 (SAL).

Belongs to the TRAFAC class translation factor GTPase superfamily. Classic translation factor GTPase family. EF-Tu/EF-1A subfamily. Monomer.

The protein localises to the cytoplasm. The catalysed reaction is GTP + H2O = GDP + phosphate + H(+). Its function is as follows. GTP hydrolase that promotes the GTP-dependent binding of aminoacyl-tRNA to the A-site of ribosomes during protein biosynthesis. The protein is Elongation factor Tu of Prosthecochloris aestuarii (strain DSM 271 / SK 413).